Consider the following 160-residue polypeptide: Cathelin-related peptide SC5 (160 aa).

The first 29 residues, M1–A29, serve as a signal peptide directing secretion. Residues Q30–V131 constitute a propeptide that is removed on maturation. Disulfide bonds link C86–C97 and C108–C125.

The protein belongs to the cathelicidin family.

The protein localises to the secreted. Its function is as follows. Broad spectrum bactericidal agent. The chain is Cathelin-related peptide SC5 from Ovis aries (Sheep).